The sequence spans 617 residues: RNA polymerase sigma factor RpoD (617 aa).

Positions 170-220 (PDDGSLPAEEVEPVNLKDDSADSKEKDDEEEESDDSSDSDDEGDGGPDPEE) are disordered. Basic and acidic residues predominate over residues 184–195 (NLKDDSADSKEK). Residues 196–218 (DDEEEESDDSSDSDDEGDGGPDP) are compositionally biased toward acidic residues. The segment at 383–453 (MVEANLRLVI…TRSIADQART (71 aa)) is sigma-70 factor domain-2. The short motif at 407–410 (DLIQ) is the Interaction with polymerase core subunit RpoC element. The interval 462 to 538 (ETINKLNRIS…DSTMQSPIEM (77 aa)) is sigma-70 factor domain-3. The tract at residues 551–604 (VLAGLTAREAKVLRMRFGIDMNTDHTLEEVGKQFDVTRERIRQIEAKALRKLRH) is sigma-70 factor domain-4. The H-T-H motif DNA-binding region spans 577 to 596 (LEEVGKQFDVTRERIRQIEA).

It belongs to the sigma-70 factor family. RpoD/SigA subfamily. As to quaternary structure, interacts transiently with the RNA polymerase catalytic core.

The protein resides in the cytoplasm. In terms of biological role, sigma factors are initiation factors that promote the attachment of RNA polymerase to specific initiation sites and are then released. This sigma factor is the primary sigma factor during exponential growth. In Pseudomonas aeruginosa (strain ATCC 15692 / DSM 22644 / CIP 104116 / JCM 14847 / LMG 12228 / 1C / PRS 101 / PAO1), this protein is RNA polymerase sigma factor RpoD.